A 333-amino-acid polypeptide reads, in one-letter code: Adenosine deaminase (333 aa).

2 residues coordinate Zn(2+): His12 and His14. The substrate site is built by His14, Asp16, and Gly170. A Zn(2+)-binding site is contributed by His197. Glu200 (proton donor) is an active-site residue. Asp278 is a Zn(2+) binding site. Asp279 contacts substrate.

It belongs to the metallo-dependent hydrolases superfamily. Adenosine and AMP deaminases family. Adenosine deaminase subfamily. Zn(2+) serves as cofactor.

The catalysed reaction is adenosine + H2O + H(+) = inosine + NH4(+). It catalyses the reaction 2'-deoxyadenosine + H2O + H(+) = 2'-deoxyinosine + NH4(+). Functionally, catalyzes the hydrolytic deamination of adenosine and 2-deoxyadenosine. This is Adenosine deaminase from Salmonella paratyphi C (strain RKS4594).